Here is a 444-residue protein sequence, read N- to C-terminus: MKVGIISLGCAKNQVDTEVMQGILENSNYKMTDDYYDADIIIVNTCGFIDDAKEESVDHILEVAQLKETGKLKVLIVAGCLSQRYQESLKEEIPEIDAMIGTDTQDKITEVISSALKGNYISFYDRLNKIDEQLFLRQPYQPGPSAYIKIAEGCHNYCSYCAIPLIRGGYRSRTIEDIKIEANHFIEKGSKELTLIAQDTTNYGSDIYGKFSLDTLLDELATIPGDFWIRVLYAYPTRITDSLIEVINRHEKICSYLDIPLQHIDDDILTSMNRGGNKEQILNLIHNLRKNIPDITLRTSLIVGFPGETDEKYQNLISFMQEIEFDHAGIFKYSDEEDTQAYNFKDKVSEDVKEQRYQEAWEVQKEITRKKNEGLVGTEMRVLIEEALEDEPTTKVGRTEGHAPEVDGAVIIPDCEASSGDFINVEIVQALDYDLIGEMTNEFS.

Residues 1-117 (MKVGIISLGC…ITEVISSALK (117 aa)) form the MTTase N-terminal domain. C10, C46, C80, C154, C158, and C161 together coordinate [4Fe-4S] cluster. Residues 140-370 (YQPGPSAYIK…WEVQKEITRK (231 aa)) form the Radical SAM core domain. The region spanning 373–441 (EGLVGTEMRV…DYDLIGEMTN (69 aa)) is the TRAM domain.

This sequence belongs to the methylthiotransferase family. RimO subfamily. [4Fe-4S] cluster is required as a cofactor.

It localises to the cytoplasm. The enzyme catalyses L-aspartate(89)-[ribosomal protein uS12]-hydrogen + (sulfur carrier)-SH + AH2 + 2 S-adenosyl-L-methionine = 3-methylsulfanyl-L-aspartate(89)-[ribosomal protein uS12]-hydrogen + (sulfur carrier)-H + 5'-deoxyadenosine + L-methionine + A + S-adenosyl-L-homocysteine + 2 H(+). Functionally, catalyzes the methylthiolation of an aspartic acid residue of ribosomal protein uS12. This is Ribosomal protein uS12 methylthiotransferase RimO from Natranaerobius thermophilus (strain ATCC BAA-1301 / DSM 18059 / JW/NM-WN-LF).